Here is a 620-residue protein sequence, read N- to C-terminus: Glutathione-regulated potassium-efflux system protein KefC (620 aa).

12 helical membrane passes run 4 to 24 (HTLI…PIAV), 26 to 46 (LGLG…PWGL), 54 to 74 (SILH…GLEL), 90 to 110 (GALQ…LLGL), 114 to 134 (VAEL…MQAM), 149 to 169 (FAVL…IPLL), 178 to 198 (MGAF…VVLL), 218 to 238 (VFSA…EEVG), 270 to 290 (GLLL…GTLL), 294 to 314 (LRIV…LWLI), 327 to 347 (WFAV…GAAQ), and 359 to 379 (SLTL…VILN). Residues 399–518 (QPRVIIAGFG…AGVEKPERET (120 aa)) enclose the RCK N-terminal domain. The segment at 597–620 (GWQGTEEGKHTGNMADEPETKPSS) is disordered.

This sequence belongs to the monovalent cation:proton antiporter 2 (CPA2) transporter (TC 2.A.37) family. KefC subfamily. As to quaternary structure, homodimer. Interacts with the regulatory subunit KefF.

The protein resides in the cell inner membrane. Functionally, pore-forming subunit of a potassium efflux system that confers protection against electrophiles. Catalyzes K(+)/H(+) antiport. In Escherichia coli O7:K1 (strain IAI39 / ExPEC), this protein is Glutathione-regulated potassium-efflux system protein KefC.